Here is a 274-residue protein sequence, read N- to C-terminus: Large ribosomal subunit protein uL2 (274 aa).

2 disordered regions span residues 28–54 (APHA…TRHI) and 224–274 (VAMN…RRRK). Positions 263–274 (KRTDKMIVRRRK) are enriched in basic and acidic residues.

The protein belongs to the universal ribosomal protein uL2 family. As to quaternary structure, part of the 50S ribosomal subunit. Forms a bridge to the 30S subunit in the 70S ribosome.

In terms of biological role, one of the primary rRNA binding proteins. Required for association of the 30S and 50S subunits to form the 70S ribosome, for tRNA binding and peptide bond formation. It has been suggested to have peptidyltransferase activity; this is somewhat controversial. Makes several contacts with the 16S rRNA in the 70S ribosome. The sequence is that of Large ribosomal subunit protein uL2 from Pseudomonas syringae pv. tomato (strain ATCC BAA-871 / DC3000).